A 263-amino-acid chain; its full sequence is Acetylglutamate kinase (263 aa).

Residues 48 to 49 (GG), Arg70, and Asn162 each bind substrate.

Belongs to the acetylglutamate kinase family. ArgB subfamily.

It is found in the cytoplasm. The enzyme catalyses N-acetyl-L-glutamate + ATP = N-acetyl-L-glutamyl 5-phosphate + ADP. The protein operates within amino-acid biosynthesis; L-arginine biosynthesis; N(2)-acetyl-L-ornithine from L-glutamate: step 2/4. Catalyzes the ATP-dependent phosphorylation of N-acetyl-L-glutamate. In Vibrio campbellii (strain ATCC BAA-1116), this protein is Acetylglutamate kinase.